Here is a 218-residue protein sequence, read N- to C-terminus: Ribose-5-phosphate isomerase A (218 aa).

Substrate is bound by residues 28 to 31 (TGST), 81 to 84 (DGAD), and 94 to 97 (KGGG). The active-site Proton acceptor is E103. K121 contacts substrate.

The protein belongs to the ribose 5-phosphate isomerase family. As to quaternary structure, homodimer.

It carries out the reaction aldehydo-D-ribose 5-phosphate = D-ribulose 5-phosphate. It functions in the pathway carbohydrate degradation; pentose phosphate pathway; D-ribose 5-phosphate from D-ribulose 5-phosphate (non-oxidative stage): step 1/1. Its function is as follows. Catalyzes the reversible conversion of ribose-5-phosphate to ribulose 5-phosphate. This Aliivibrio fischeri (strain ATCC 700601 / ES114) (Vibrio fischeri) protein is Ribose-5-phosphate isomerase A.